We begin with the raw amino-acid sequence, 144 residues long: Large ribosomal subunit protein uL13 (144 aa).

This sequence belongs to the universal ribosomal protein uL13 family. Part of the 50S ribosomal subunit.

This protein is one of the early assembly proteins of the 50S ribosomal subunit, although it is not seen to bind rRNA by itself. It is important during the early stages of 50S assembly. The polypeptide is Large ribosomal subunit protein uL13 (Natronomonas pharaonis (strain ATCC 35678 / DSM 2160 / CIP 103997 / JCM 8858 / NBRC 14720 / NCIMB 2260 / Gabara) (Halobacterium pharaonis)).